Reading from the N-terminus, the 257-residue chain is MTTMSGYTRSQRPRQAILGQLPRIHRADGSPIRVLLVDDEPALTNLVKMALHYEGWDVEVAHDGQEAIAKFDKVGPDVLVLDIMLPDVDGLEILRRVRESDVYTPTLFLTARDSVMDRVTGLTSGADDYMTKPFSLEELVARLRGLLRRSSHLERPADEALRVGDLTLDGASREVTRDGTPISLSSTEFELLRFLMRNPRRALSRTEILDRVWNYDFAGRTSIVDLYISYLRKKIDSDREPMIHTVRGIGYMLRPPE.

The Response regulatory domain maps to 33-147; that stretch reads RVLLVDDEPA…ELVARLRGLL (115 aa). The residue at position 82 (Asp-82) is a 4-aspartylphosphate. A DNA-binding region (ompR/PhoB-type) is located at residues 158–255; it reads DEALRVGDLT…VRGIGYMLRP (98 aa).

Post-translationally, phosphorylated by TrcS.

Its function is as follows. Member of the two-component regulatory system TrcS/TrcR. Activates its own expression by binding specifically to the AT-rich sequence of the trcR promoter region. Also negatively regulates the expression of Rv1057 by binding to an AT-rich sequences within the Rv1057 upstream sequence. The TrcR-TrcS regulatory system may act as a transition regulatory system involved in adapting to an intracellular environment and transitioning from latency to reactivation. The protein is Transcriptional regulatory protein TrcR of Mycobacterium tuberculosis (strain ATCC 25618 / H37Rv).